Here is a 432-residue protein sequence, read N- to C-terminus: Homogentisate 1,2-dioxygenase (432 aa).

Catalysis depends on His-286, which acts as the Proton acceptor. His-329 and Glu-335 together coordinate Fe cation. Tyr-344 and His-365 together coordinate homogentisate. His-365 contacts Fe cation.

Belongs to the homogentisate dioxygenase family. As to quaternary structure, hexamer; dimer of trimers. Requires Fe cation as cofactor.

It catalyses the reaction homogentisate + O2 = 4-maleylacetoacetate + H(+). It participates in amino-acid degradation; L-phenylalanine degradation; acetoacetate and fumarate from L-phenylalanine: step 4/6. Its function is as follows. Involved in the catabolism of homogentisate (2,5-dihydroxyphenylacetate or 2,5-OH-PhAc), a central intermediate in the degradation of phenylalanine and tyrosine. Catalyzes the oxidative ring cleavage of the aromatic ring of homogentisate to yield maleylacetoacetate. The sequence is that of Homogentisate 1,2-dioxygenase from Bordetella pertussis (strain Tohama I / ATCC BAA-589 / NCTC 13251).